The following is a 71-amino-acid chain: Protein YqgC (71 aa).

The polypeptide is Protein YqgC (yqgC) (Escherichia coli (strain K12)).